Consider the following 477-residue polypeptide: Chaperonin GroEL 2 (477 aa).

Residues 29–32, 86–90, and Gly416 each bind ATP; these read TLGP and DGTTT.

This sequence belongs to the chaperonin (HSP60) family. As to quaternary structure, forms a cylinder of 14 subunits composed of two heptameric rings stacked back-to-back. Interacts with the co-chaperonin GroES.

It localises to the cytoplasm. It catalyses the reaction ATP + H2O + a folded polypeptide = ADP + phosphate + an unfolded polypeptide.. Functionally, together with its co-chaperonin GroES, plays an essential role in assisting protein folding. The GroEL-GroES system forms a nano-cage that allows encapsulation of the non-native substrate proteins and provides a physical environment optimized to promote and accelerate protein folding. The polypeptide is Chaperonin GroEL 2 (Streptomyces lividans).